The primary structure comprises 777 residues: MMSTRTFGETIEEYEVQHLLGKGGFASVYKARCLHSHQDVAIKMIDKKLIQGTGLTSRVRQEVEIHSRLKHPSVLQLYTFFQDVNYVYLVLELAHNGELQRYMKQHLLRPFTESEGATILRQVVAGLLYLHSHNIMHRDISLSNLLLSKEMHIKIADFGLATQLKRPDERHMTMCGTPNYISPEVVSRLSHGLPADVWSVGCMLYTLLVGRPPFETEGVESTLNKVVMSEFMMPSHLSFEAQDLIHKLLKKSPHERITLEQVLRHPFLKRTVGGSSYSTTPGALNEFSQSLASSDSGIVTFASSDSRKSHRLRSVDNSSGQSMPQIMEEYLPSSNLGYDSKEHRPIYEQHGSYLPTPGDQLENRDAKWPGTNNLAPFTSDSDMIPSPVGEKRLLMPPLETKRLQPTRYKTKNAIMSILRTGEVVLEFVKFKVKYNEDRITDICRISEDGRRIIIYQPDPGRGLPIREHPPDPLIPSENCVYNYENLPNKHWKKYVYAARFVGLVKSKTPKITFFSSLGKCQLMETMTDFEVRFYSGAKLLKSSTDGVKVFNSNGAVLSDNGCAEARNLIDHGNECFSHCVNISNALELAQTKENTCFPVTIGRRPAADMHAGQRFDGLRDTTNFAYSTPKSNQGSINFSVSTISTTRSASDYNSNTPRLNMLAAHQNVPIKRITVPEIGIVTELSHGVVQVQFYDGSMVSVIPKVQGGGITYTQANGLSTHFGNNDDLPFAVRDRINQMPQLQMKLKCAPLLGNARSVDCHLMTPKTTTPFYNRMII.

Positions 14-268 (YEVQHLLGKG…LEQVLRHPFL (255 aa)) constitute a Protein kinase domain. ATP is bound by residues 20-28 (LGKGGFASV) and Lys-43. Catalysis depends on Asp-139, which acts as the Proton acceptor. The segment covering 371-381 (TNNLAPFTSDS) has biased composition (polar residues). The tract at residues 371–390 (TNNLAPFTSDSDMIPSPVGE) is disordered. Positions 390-507 (EKRLLMPPLE…ARFVGLVKSK (118 aa)) constitute a Cryptic POLO box 1 (CPB1) domain. One can recognise a Cryptic POLO box 2 (CPB2) domain in the interval 508–611 (TPKITFFSSL…GRRPAADMHA (104 aa)). The 80-residue stretch at 669–748 (PIKRITVPEI…MPQLQMKLKC (80 aa)) folds into the POLO box domain.

Belongs to the protein kinase superfamily. Ser/Thr protein kinase family. CDC5/Polo subfamily. As to quaternary structure, homodimer. Post-translationally, ubiquitinated by the SCF(Slimb) ubiquitin ligase complex; leading to its degradation by the proteasome during interphase and regulating centriole number and ensuring the block to centriole reduplication.

Its subcellular location is the cytoplasm. It localises to the cytoskeleton. It is found in the microtubule organizing center. The protein localises to the centrosome. The protein resides in the centriole. It carries out the reaction L-seryl-[protein] + ATP = O-phospho-L-seryl-[protein] + ADP + H(+). The enzyme catalyses L-threonyl-[protein] + ATP = O-phospho-L-threonyl-[protein] + ADP + H(+). In terms of biological role, serine/threonine-protein kinase that plays a central role in centriole duplication. Able to trigger procentriole formation on the surface of the mother centriole cylinder, using mother centriole as a platform, leading to the recruitment of centriole biogenesis proteins such as sas-6. When overexpressed, it is able to induce centrosome amplification through the simultaneous generation of multiple procentrioles adjoining each parental centriole during S phase. Centrosome amplification following overexpression can initiate tumorigenesis, highlighting the importance of centrosome regulation in cancers. The protein is Serine/threonine-protein kinase PLK4 (SAK) of Drosophila persimilis (Fruit fly).